Consider the following 72-residue polypeptide: Nod factor export ATP-binding protein I (72 aa).

It belongs to the ABC transporter superfamily. Lipooligosaccharide exporter (TC 3.A.1.102) family. As to quaternary structure, the complex is composed of two ATP-binding proteins (NodI) and two transmembrane proteins (NodJ).

The protein localises to the cell inner membrane. Functionally, part of the ABC transporter complex NodIJ involved in the export of the nodulation factors (Nod factors), the bacterial signal molecules that induce symbiosis and subsequent nodulation induction. Nod factors are LCO (lipo-chitin oligosaccharide), a modified beta-1,4-linked N-acetylglucosamine oligosaccharide. This subunit is responsible for energy coupling to the transport system. The polypeptide is Nod factor export ATP-binding protein I (Rhizobium leguminosarum bv. trifolii).